Consider the following 89-residue polypeptide: Defensin-like protein 197 (89 aa).

A signal peptide spans 1–26 (MKFVSVFLVLFIFFLVVLEAPEKIEA). Intrachain disulfides connect Cys-33–Cys-86, Cys-46–Cys-70, Cys-55–Cys-81, and Cys-59–Cys-83.

The protein belongs to the DEFL family. Protease inhibitor I18 (RTI/MTI-2) subfamily.

The protein resides in the secreted. In Arabidopsis thaliana (Mouse-ear cress), this protein is Defensin-like protein 197 (ATTI6).